A 729-amino-acid polypeptide reads, in one-letter code: Solute carrier family 15 member 2 (729 aa).

The segment at 1 to 34 (MNPFQKNESKETLFSPVSTEEMLPGPPSPPKKST) is disordered. Residues 1 to 57 (MNPFQKNESKETLFSPVSTEEMLPGPPSPPKKSTPKLFGSSYPLSIAFIVVNEFCER) are Cytoplasmic-facing. Position 9 is a phosphoserine (serine 9). Threonine 12 carries the phosphothreonine modification. A Phosphoserine modification is found at serine 28. Residues 58 to 78 (FSYYGMKAVLTLYFLYFLHWN) form a helical membrane-spanning segment. Topologically, residues 79-87 (EDTSTSVYH) are extracellular. A helical membrane pass occupies residues 88–108 (AFSSLCYFTPILGAAIADSWL). Over 109–113 (GKFKT) the chain is Cytoplasmic. A helical transmembrane segment spans residues 114 to 134 (IIYLSLVYVLGHVFKSLGAIP). The Extracellular portion of the chain corresponds to 135-139 (ILGGK). A helical transmembrane segment spans residues 140–160 (MLHTILSLVGLSLIALGTGGI). The Cytoplasmic segment spans residues 161-183 (KPCVAAFGGDQFEEEHAEARTRY). A helical transmembrane segment spans residues 184-204 (FSVFYLSINAGSLISTFITPM). Residues 205 to 217 (LRGDVKCFGEDCY) lie on the Extracellular side of the membrane. Residues 218-238 (ALAFGIPGLLMVLALVVFAMG) form a helical membrane-spanning segment. The Cytoplasmic portion of the chain corresponds to 239–295 (SKMYRKPPPEGNIVAQVTKCIWFAICNRFRNRSEDIPKRQHWLDWAAEKYPKHLIMD). The helical transmembrane segment at 296–316 (VKALTRILFLYIPLPMFWALL) threads the bilayer. Residues 317–343 (DQQGSRWTLQANKMDGDLGFFVLQPDQ) are Extracellular-facing. Residues 344-364 (MQVLNPFLVLVFIPLFDLVIY) traverse the membrane as a helical segment. Residues 365 to 380 (RLISKCGVNFSSLRKM) are Cytoplasmic-facing. A helical transmembrane segment spans residues 381-401 (AVGMILACLAFAVAALVEIKI). Residues 402-611 (NGMIHPQPAS…PANKLSIAWQ (210 aa)) are Extracellular-facing. Residues 402–611 (NGMIHPQPAS…PANKLSIAWQ (210 aa)) form an extracellular domain (ECD) region. 4 N-linked (GlcNAc...) asparagine glycosylation sites follow: asparagine 448, asparagine 472, asparagine 528, and asparagine 587. A helical membrane pass occupies residues 612-632 (LPQYVLVTAAEVMFSVTGLEF). Topologically, residues 633–643 (SYSQAPSSMKS) are cytoplasmic. Residues 644–664 (VLQAAWLLTVAVGNIIVLIVA) traverse the membrane as a helical segment. Residues 665 to 674 (QFSGLVQWAE) lie on the Extracellular side of the membrane. The chain crosses the membrane as a helical span at residues 675 to 695 (FVLFSCLLLVVCLIFSVMGYY). Residues 696–729 (YVPLKSEGIHEATEKQIPHIQGNMINLETKNTRL) are Cytoplasmic-facing.

It belongs to the major facilitator superfamily. Proton-dependent oligopeptide transporter (POT/PTR) (TC 2.A.17) family. Interacts (via extracellular domain region) with trypsin. As to expression, expressed in kidney brush border cells (at protein level). Highly expressed in macrophages.

It is found in the apical cell membrane. It localises to the cytoplasmic vesicle. The protein resides in the phagosome membrane. The protein localises to the cell membrane. It carries out the reaction N-acetyl-D-muramoyl-L-alanyl-D-isoglutamine(out) + 3 H(+)(out) = N-acetyl-D-muramoyl-L-alanyl-D-isoglutamine(in) + 3 H(+)(in). It catalyses the reaction a dipeptide(out) + 2 H(+)(out) = a dipeptide(in) + 2 H(+)(in). The enzyme catalyses glycyl-L-leucine(out) + 2 H(+)(out) = glycyl-L-leucine(in) + 2 H(+)(in). The catalysed reaction is glycyl-L-lysine(out) + 2 H(+)(out) = glycyl-L-lysine(in) + 2 H(+)(in). It carries out the reaction glycyl-L-glutamate(out) + 3 H(+)(out) = glycyl-L-glutamate(in) + 3 H(+)(in). It catalyses the reaction L-alanyl-L-alanine(out) + 2 H(+)(out) = L-alanyl-L-alanine(in) + 2 H(+)(in). The enzyme catalyses an L-amino acid tripeptide(out) + 2 H(+)(out) = an L-amino acid tripeptide(in) + 2 H(+)(in). The catalysed reaction is carnosine(out) + 2 H(+)(out) = carnosine(in) + 2 H(+)(in). In terms of biological role, proton-coupled amino-acid transporter that transports oligopeptides of 2 to 4 amino acids with a preference for dipeptides. Transports neutral and anionic dipeptides with a proton to peptide stoichiometry of 2:1 or 3:1. In kidney, involved in the absorption of circulating di- and tripeptides from the glomerular filtrate. Can also transport beta-lactam antibiotics, such as the aminocephalosporin cefadroxil, and other antiviral and anticancer drugs. Transports the dipeptide-like aminopeptidase inhibitor bestatin. Also able to transport carnosine. Involved in innate immunity by promoting the detection of microbial pathogens by NOD-like receptors (NLRs). Mediates transport of bacterial peptidoglycans across the plasma membrane or, in macrophages, the phagosome membrane: catalyzes the transport of certain bacterial peptidoglycans, such as muramyl dipeptide (MDP), the NOD2 ligand. This Mus musculus (Mouse) protein is Solute carrier family 15 member 2.